Reading from the N-terminus, the 1244-residue chain is DNA polymerase beta (1244 aa).

Tandem repeats lie at residues 1069-1072, 1073-1076, 1077-1080, 1081-1084, 1085-1088, 1089-1092, 1093-1096, 1097-1100, 1101-1104, 1105-1108, 1109-1112, 1113-1116, and 1117-1120. The segment at 1069–1118 is disordered; the sequence is AGNPAGNPAGNPAGNPAGNPAGNPAGNPAGNPAGNPAGNPAGNPAGNPAG. Residues 1069 to 1120 are 13 X 4 AA tandem repeats of A-G-N-P; sequence AGNPAGNPAGNPAGNPAGNPAGNPAGNPAGNPAGNPAGNPAGNPAGNPAGNP.

Belongs to the DNA polymerase type-B family.

It catalyses the reaction DNA(n) + a 2'-deoxyribonucleoside 5'-triphosphate = DNA(n+1) + diphosphate. DNA-directed DNA polymerase involved in viral DNA replication. In African swine fever virus (isolate Pig/Portugal/Lis 60/1960) (ASFV), this protein is DNA polymerase beta (DPOL).